We begin with the raw amino-acid sequence, 262 residues long: Hydroxyethylthiazole kinase (262 aa).

Met50 contributes to the substrate binding site. Residues Arg125 and Thr171 each coordinate ATP. Position 198 (Gly198) interacts with substrate.

The protein belongs to the Thz kinase family. Requires Mg(2+) as cofactor.

It catalyses the reaction 5-(2-hydroxyethyl)-4-methylthiazole + ATP = 4-methyl-5-(2-phosphooxyethyl)-thiazole + ADP + H(+). It functions in the pathway cofactor biosynthesis; thiamine diphosphate biosynthesis; 4-methyl-5-(2-phosphoethyl)-thiazole from 5-(2-hydroxyethyl)-4-methylthiazole: step 1/1. In terms of biological role, catalyzes the phosphorylation of the hydroxyl group of 4-methyl-5-beta-hydroxyethylthiazole (THZ). This Escherichia coli (strain SMS-3-5 / SECEC) protein is Hydroxyethylthiazole kinase.